Here is a 1023-residue protein sequence, read N- to C-terminus: Sodium/potassium-transporting ATPase subunit alpha-1 (1023 aa).

Residues 1–5 constitute a propeptide that is removed on maturation; that stretch reads MGKGV. Positions 1-11 are enriched in basic and acidic residues; that stretch reads MGKGVGRDKYE. Positions 1 to 38 are disordered; it reads MGKGVGRDKYEPAAVSEHGDKKGKKAKKERDMDELKKE. Over 6–87 the chain is Cytoplasmic; the sequence is GRDKYEPAAV…NALTPPPTTP (82 aa). N6-acetyllysine is present on lysine 9. Tyrosine 10 is subject to Phosphotyrosine. The residue at position 16 (serine 16) is a Phosphoserine; by PKC. The residue at position 21 (lysine 21) is an N6-acetyllysine. Residues 28–38 are compositionally biased toward basic and acidic residues; the sequence is KERDMDELKKE. Residues serine 40 and serine 47 each carry the phosphoserine modification. Residues 82–84 form a phosphoinositide-3 kinase binding region; sequence PPP. Residues 88–108 traverse the membrane as a helical segment; sequence EWVKFCRQLFGGFSMLLWIGA. Residues 109-131 lie on the Extracellular side of the membrane; that stretch reads ILCFLAYGILAATEEDFDNDNLY. The helical transmembrane segment at 132–152 threads the bilayer; sequence LGVVLAAVVIITGCFSYYQEA. Over 153–288 the chain is Cytoplasmic; the sequence is KSSKIMESFK…GGQTPIAAEI (136 aa). The segment at 216 to 235 is disordered; sequence SSLTGESEPQTRSPDFTNEN. At serine 228 the chain carries Phosphoserine. Tyrosine 260 is subject to Phosphotyrosine. The helical transmembrane segment at 289–308 threads the bilayer; the sequence is EHFIHIITGVAVFLGVSFFI. At 309–320 the chain is on the extracellular side; that stretch reads LSLILEYTWLEA. A helical transmembrane segment spans residues 321–338; that stretch reads VIFLIGIIVANVPEGLLA. Over 339 to 772 the chain is Cytoplasmic; that stretch reads TVTVCLTLTA…EEGRLIFDNL (434 aa). The active-site 4-aspartylphosphate intermediate is aspartate 376. Residues serine 452 and serine 484 each carry the phosphoserine modification. Lysine 487 provides a ligand contact to ATP. The residue at position 542 (tyrosine 542) is a Phosphotyrosine. Positions 596-717 are mediates interaction with SCN7A; that stretch reads RAAVPDAVGK…QGAIVAVTGD (122 aa). Lysine 661 is modified (N6-succinyllysine). A phosphoserine mark is found at serine 668 and serine 675. Mg(2+) is bound by residues aspartate 717 and aspartate 721. A helical membrane pass occupies residues 773–792; the sequence is KKSIAYTLTSNIPEITPFLI. The Extracellular segment spans residues 793 to 802; it reads FIIANIPLPL. A helical transmembrane segment spans residues 803–823; sequence GTVTILCIDLGTDMVPAISLA. At 824 to 843 the chain is on the cytoplasmic side; the sequence is YEQAESDIMKRQPRNPKTDK. Residues 844-866 form a helical membrane-spanning segment; it reads LVNERLISMAYGQIGMIQALGGF. Topologically, residues 867–918 are extracellular; sequence FTYFVILAENGFLPFHLLGIRVDWDDRWINDVEDSYGQQWTYEQRKIVEFTC. A helical membrane pass occupies residues 919-938; the sequence is HTAFFVSIVVVQWADLVICK. The Cytoplasmic segment spans residues 939 to 951; that stretch reads TRRNSVFQQGMKN. The residue at position 943 (serine 943) is a Phosphoserine; by PKA. The chain crosses the membrane as a helical span at residues 952 to 970; it reads KILIFGLFEETALAAFLSY. At 971 to 985 the chain is on the extracellular side; that stretch reads CPGMGVALRMYPLKP. A helical transmembrane segment spans residues 986–1006; the sequence is TWWFCAFPYSLLIFVYDEIRK. The Cytoplasmic segment spans residues 1007–1023; that stretch reads LIIRRRPGGWVEKETYY.

Belongs to the cation transport ATPase (P-type) (TC 3.A.3) family. Type IIC subfamily. The sodium/potassium-transporting ATPase is composed of a catalytic alpha subunit, an auxiliary non-catalytic beta subunit and an additional regulatory subunit. Interacts with regulatory subunit FXYD1. Interacts with regulatory subunit FXYD3. Interacts with SIK1. Interacts with SLC35G1 and STIM1. Interacts with CLN3; this interaction regulates the sodium/potassium-transporting ATPase complex localization at the plasma membrane. Interacts with SCN7A; activates ATP1A1 P-type sodium:potassium-exchanging transporter activity which indirectly signals to nearby neurons to regulate sodium homeostasis. Post-translationally, phosphorylation on Tyr-10 modulates pumping activity. Phosphorylation of Ser-943 by PKA modulates the response of ATP1A1 to PKC. Dephosphorylation by protein phosphatase 2A (PP2A) following increases in intracellular sodium, leading to increase catalytic activity. Expressed in endocardial endothelial cells.

The protein resides in the cell membrane. The protein localises to the basolateral cell membrane. It localises to the sarcolemma. Its subcellular location is the cell projection. It is found in the axon. The protein resides in the melanosome. The catalysed reaction is K(+)(out) + Na(+)(in) + ATP + H2O = K(+)(in) + Na(+)(out) + ADP + phosphate + H(+). This is the catalytic component of the active enzyme, which catalyzes the hydrolysis of ATP coupled with the exchange of sodium and potassium ions across the plasma membrane. This action creates the electrochemical gradient of sodium and potassium ions, providing the energy for active transport of various nutrients. Could also be part of an osmosensory signaling pathway that senses body-fluid sodium levels and controls salt intake behavior as well as voluntary water intake to regulate sodium homeostasis. This is Sodium/potassium-transporting ATPase subunit alpha-1 (ATP1A1) from Oryctolagus cuniculus (Rabbit).